We begin with the raw amino-acid sequence, 111 residues long: uncharacterized protein (111 aa).

This is an uncharacterized protein from Methanocaldococcus jannaschii (strain ATCC 43067 / DSM 2661 / JAL-1 / JCM 10045 / NBRC 100440) (Methanococcus jannaschii).